An 828-amino-acid polypeptide reads, in one-letter code: Neurotrophin receptor-interacting factor 1 (828 aa).

Residues 14-85 enclose the KRAB 1 domain; the sequence is VKFEDVSLTF…QREIPQDTLP (72 aa). Lys-15 is covalently cross-linked (Glycyl lysine isopeptide (Lys-Gly) (interchain with G-Cter in ubiquitin)). The SCAN box domain occupies 158–240; that stretch reads RQKFRHFQYE…ALLENMTSVS (83 aa). The KRAB 2 domain occupies 280–370; that stretch reads VTFQDVAVDF…ESILEDGVKE (91 aa). Disordered stretches follow at residues 328–355, 377–490, and 575–611; these read RELT…RNGT, NQVG…DPIT, and QKGY…LSTS. A compositionally biased stretch (polar residues) spans 345–355; sequence PNTNDLSRNGT. Over residues 384-394 the composition is skewed to basic and acidic residues; the sequence is EKGHPQKKFSE. Residues 418–433 show a composition bias toward basic residues; sequence KYVKVKQKGTGKRKGR. The segment covering 458-478 has biased composition (polar residues); the sequence is RSGSTPVTHGSSIKKQQQGSE. Residues 589 to 599 are compositionally biased toward basic residues; that stretch reads SWKHIKPHQKG. A compositionally biased stretch (basic and acidic residues) spans 600–611; that stretch reads SKGERVEELSTS. 5 consecutive C2H2-type zinc fingers follow at residues 684-706, 712-734, 740-762, 768-790, and 796-818; these read CRCS…KKIH, YMCM…LRIH, FECS…LRTH, YHCE…ERTH, and YVCI…QKTH.

This sequence belongs to the krueppel C2H2-type zinc-finger protein family. As to quaternary structure, interacts with NGFR/p75(NTR). Interacts (via KRAB 1 domain) with TRAF6. Interacts (when ubiquitinated at Lys-15) with SQSTM1/p62. In terms of processing, ubiquitinated by TRAF6 at Lys-15 through 'Lys-63'-linked polyubiquitination. 'Lys-63'-linked polyubiquitination occurs in response to NGFR/p75(NTR) cleavage by gamma-secretase and promotes binding with the ICD cleavage product of NGFR/p75(NTR), followed by translocation into the nucleus and subsequent apoptosis. As to expression, ubiquitously expressed at low level. Expressed at higher level in testis.

The protein localises to the cytoplasm. It is found in the nucleus. In terms of biological role, transcription regulator involved in NGFR/p75(NTR)-mediated apoptosis. Essential component of the NGFR/p75(NTR) apoptotic pathway: upon ligand-binding and subsequent cleavage of NGFR/p75(NTR), binds to the intracellular domain (ICD) cleavage product of NGFR/p75(NTR), translocates to the nucleus and induces apoptosis, possibly by regulating expression of key regulators of apoptosis. Induces NGFR/p75(NTR)-mediated apoptosis in retina and sympathetic neurons. May also regulate expression of neuronal cholesterol biosynthesis genes. Probably acts as a transcription repressor: specifically binds to the 3'-end of zinc-finger coding genes and recruiting chromatin-modifying proteins such as SETDB1 and TRIM28/KAP1, leading to transcription repression. In Mus musculus (Mouse), this protein is Neurotrophin receptor-interacting factor 1 (Nrif1).